Here is an 894-residue protein sequence, read N- to C-terminus: Phosphinomethylmalate isomerase (894 aa).

Residues C438, C504, and C507 each coordinate [4Fe-4S] cluster.

Belongs to the aconitase/IPM isomerase family. [4Fe-4S] cluster serves as cofactor.

The enzyme catalyses phosphinomethylmalate = phosphinomethylisomalate. It catalyses the reaction phosphinomethylmalate = 2-(phosphinatomethylidene)butanedioate + H2O. The catalysed reaction is 2-(phosphinatomethylidene)butanedioate + H2O = phosphinomethylisomalate. The protein operates within secondary metabolite biosynthesis; bialaphos biosynthesis. Its function is as follows. Isomerase involved in the biosynthesis of phosphinothricin tripeptide (PTT), also known as bialaphos (BA), a natural-product antibiotic and potent herbicide. Probably catalyzes the isomerization of phosphinomethylmalate to phosphinomethylisomalate. Shows no standard aconitase activity with citrate as a substrate and is not able to complement an acnA mutant. In Streptomyces viridochromogenes (strain DSM 40736 / JCM 4977 / BCRC 1201 / Tue 494), this protein is Phosphinomethylmalate isomerase.